A 250-amino-acid chain; its full sequence is Methylthioribulose-1-phosphate dehydratase (250 aa).

Zn(2+) contacts are provided by histidine 103 and histidine 105.

Belongs to the aldolase class II family. MtnB subfamily. The cofactor is Zn(2+).

The enzyme catalyses 5-(methylsulfanyl)-D-ribulose 1-phosphate = 5-methylsulfanyl-2,3-dioxopentyl phosphate + H2O. The protein operates within amino-acid biosynthesis; L-methionine biosynthesis via salvage pathway; L-methionine from S-methyl-5-thio-alpha-D-ribose 1-phosphate: step 2/6. Its function is as follows. Catalyzes the dehydration of methylthioribulose-1-phosphate (MTRu-1-P) into 2,3-diketo-5-methylthiopentyl-1-phosphate (DK-MTP-1-P). The sequence is that of Methylthioribulose-1-phosphate dehydratase from Leptospira borgpetersenii serovar Hardjo-bovis (strain JB197).